A 711-amino-acid polypeptide reads, in one-letter code: MKLKLNVLTIVLLPVHLLITIYSALIFIPWYFLTNAKKKNAMAKRIKAKPTSDKPGSPYRSVTHFDSLAVIDIPGADTLDKLFDHAVAKFGKKDSLGTREILSEENEMQPNGKVFKKLILGNYKWINYLEVNCRVNNFGSGLTALGLKPKNTIAIFCETRAEWMIAAQTCFKYNFPLVTLYATLGKEAVVHGLNESEASYLITSVELLESKLKAALLDINCVKHIIYVDNKTINRAEYPEGLEIHSMQSVEELGSKPENSSIPPSRPTPSDMAIVMYTSGSTGRPKGVMMHHSNLIAGMTGQCERIPGLGPKDTYIGYLPLAHVLELTAEISCFTYGCRIGYSSPLTLSDQSSKIKKGSKGDCTVLKPTLMAAVPEIMDRIYKNVMSKVQEMNYIQKTLFKIGYDYKLEQIKKGYDAPLCNLILFKKVKALLGGNVRMMLSGGAPLSPQTHRFMNVCFCCPIGQGYGLTESCGAGTVTEVTDYTTGRVGAPLICCEIKLKDWQEGGYTVHDKPNPRGEIVIGGQNISMGYFKNEEKTAEDYSVDENGQRWFCTGDIGEFHPDGCLQIIDRKKDLVKLQAGEYVSLGKVEAALKNCPLIDNICAFAKSDQSYVISFVVPNQKKLTLLAQQKGVEGSWVDICNNPAMEAEILKEIREAANAMKLERFEIPIKVRLSPEPWTPETGLVTDAFKLKRKELKNHYLKDIERMYGGK.

Residues 8-28 form a helical; Signal-anchor for type III membrane protein membrane-spanning segment; the sequence is LTIVLLPVHLLITIYSALIFI. At 29 to 711 the chain is on the cytoplasmic side; it reads PWYFLTNAKK…KDIERMYGGK (683 aa). Position 447 is a phosphoserine (Ser447).

Belongs to the ATP-dependent AMP-binding enzyme family. The cofactor is Mg(2+).

The protein localises to the mitochondrion outer membrane. It localises to the peroxisome membrane. It is found in the microsome membrane. The protein resides in the endoplasmic reticulum membrane. Its subcellular location is the cell membrane. The enzyme catalyses a long-chain fatty acid + ATP + CoA = a long-chain fatty acyl-CoA + AMP + diphosphate. It catalyses the reaction (5Z,8Z,11Z,14Z)-eicosatetraenoate + ATP + CoA = (5Z,8Z,11Z,14Z)-eicosatetraenoyl-CoA + AMP + diphosphate. The catalysed reaction is 15-hydroxy-(5Z,8Z,11Z,13E)-eicosatetraenoate + ATP + CoA = 15-hydroxy-(5Z,8Z,11Z,13E)-eicosatetraenoyl-CoA + AMP + diphosphate. It carries out the reaction 12-hydroxy-(5Z,8Z,10E,14Z)-eicosatetraenoate + ATP + CoA = 12-hydroxy-(5Z,8Z,10E,14Z)-eicosatetraenoyl-CoA + AMP + diphosphate. The enzyme catalyses 5-hydroxy-(6E,8Z,11Z,14Z)-eicosatetraenoate + ATP + CoA = 5-hydroxy-(6E,8Z,11Z,14Z)-eicosatetraenoyl-CoA + AMP + diphosphate. It catalyses the reaction 5,6-epoxy-(8Z,11Z,14Z)-eicosatrienoate + ATP + CoA = 5,6-epoxy-(8Z,11Z,14Z)-eicosatrienoyl-CoA + AMP + diphosphate. The catalysed reaction is 14,15-epoxy-(5Z,8Z,11Z)-eicosatrienoate + ATP + CoA = 14,15-epoxy-(5Z,8Z,11Z)-eicosatrienoyl-CoA + AMP + diphosphate. It carries out the reaction 11,12-epoxy-(5Z,8Z,14Z)-eicosatrienoate + ATP + CoA = 11,12-epoxy-(5Z,8Z,14Z)-eicosatrienoyl-CoA + AMP + diphosphate. The enzyme catalyses 8,9-epoxy-(5Z,11Z,14Z)-eicosatrienoate + ATP + CoA = 8,9-epoxy-(5Z,11Z,14Z)-eicosatrienoyl-CoA + AMP + diphosphate. It catalyses the reaction hexadecanoate + ATP + CoA = hexadecanoyl-CoA + AMP + diphosphate. The catalysed reaction is (E)-hexadec-2-enoate + ATP + CoA = (2E)-hexadecenoyl-CoA + AMP + diphosphate. Both triacsin C and rosiglitazone inhibit arachidonoyl-CoA ligase activity. Its function is as follows. Catalyzes the conversion of long-chain fatty acids to their active form acyl-CoA for both synthesis of cellular lipids, and degradation via beta-oxidation. Preferentially activates arachidonate and eicosapentaenoate as substrates. Preferentially activates 8,9-EET &gt; 14,15-EET &gt; 5,6-EET &gt; 11,12-EET. Modulates glucose-stimulated insulin secretion by regulating the levels of unesterified EETs. Modulates prostaglandin E2 secretion. The sequence is that of Long-chain-fatty-acid--CoA ligase 4 (Acsl4) from Rattus norvegicus (Rat).